The sequence spans 183 residues: UPF0200 protein Memar_1556 (183 aa).

8-15 (GMPASGKG) contributes to the ATP binding site.

It belongs to the UPF0200 family.

This is UPF0200 protein Memar_1556 from Methanoculleus marisnigri (strain ATCC 35101 / DSM 1498 / JR1).